Consider the following 405-residue polypeptide: Dynactin subunit 2 (405 aa).

Residues 1–25 form a disordered region; sequence MADPKYADLPGIARNEPDVYETSDL. Ala-2 is subject to N-acetylalanine. The residue at position 6 (Tyr-6) is a Phosphotyrosine. Ser-85 is subject to Phosphoserine. Tyr-88 carries the post-translational modification Phosphotyrosine. A coiled-coil region spans residues 105 to 132; sequence YQRLLHEVQELTTEVEKIKMTVKESATE. A Phosphothreonine modification is found at Thr-136. Residues 187 to 207 are disordered; that stretch reads KNTKGAGSGGKTTSGSPPDSS. The residue at position 324 (Ser-324) is a Phosphoserine.

The protein belongs to the dynactin subunit 2 family. In terms of assembly, subunit of dynactin, a multiprotein complex part of a tripartite complex with dynein and a adapter, such as BICDL1, BICD2 or HOOK3. The dynactin complex is built around ACTR1A/ACTB filament and consists of an actin-related filament composed of a shoulder domain, a pointed end and a barbed end. Its length is defined by its flexible shoulder domain. The soulder is composed of 2 DCTN1 subunits, 4 DCTN2 and 2 DCTN3. The 4 DCNT2 (via N-terminus) bind the ACTR1A filament and act as molecular rulers to determine the length. The pointed end is important for binding dynein-dynactin cargo adapters and consists of 4 subunits: ACTR10, DCNT4, DCTN5 and DCTN6. The barbed end is composed of a CAPZA1:CAPZB heterodimers, which binds ACTR1A/ACTB filament and dynactin and stabilizes dynactin. Interacts with BICD2 and CEP135. Interacts with DYNAP. Interacts with ECPAS. Interacts with MAPRE1.

It is found in the cytoplasm. The protein resides in the cytoskeleton. It localises to the microtubule organizing center. Its subcellular location is the centrosome. The protein localises to the membrane. In terms of biological role, part of the dynactin complex that activates the molecular motor dynein for ultra-processive transport along microtubules. In the dynactin soulder domain, binds the ACTR1A filament and acts as a molecular ruler to determine the length. Modulates cytoplasmic dynein binding to an organelle, and plays a role in prometaphase chromosome alignment and spindle organization during mitosis. Involved in anchoring microtubules to centrosomes. May play a role in synapse formation during brain development. The chain is Dynactin subunit 2 (DCTN2) from Sus scrofa (Pig).